Here is a 177-residue protein sequence, read N- to C-terminus: Large ribosomal subunit protein uL6 (177 aa).

It belongs to the universal ribosomal protein uL6 family. Part of the 50S ribosomal subunit.

In terms of biological role, this protein binds to the 23S rRNA, and is important in its secondary structure. It is located near the subunit interface in the base of the L7/L12 stalk, and near the tRNA binding site of the peptidyltransferase center. In Xanthobacter autotrophicus (strain ATCC BAA-1158 / Py2), this protein is Large ribosomal subunit protein uL6.